A 308-amino-acid chain; its full sequence is Aspartate carbamoyltransferase catalytic subunit (308 aa).

Positions 57 and 58 each coordinate carbamoyl phosphate. An L-aspartate-binding site is contributed by Lys-86. 3 residues coordinate carbamoyl phosphate: Arg-107, His-135, and Gln-138. L-aspartate contacts are provided by Arg-168 and Arg-229. Carbamoyl phosphate contacts are provided by Leu-268 and Pro-269.

It belongs to the aspartate/ornithine carbamoyltransferase superfamily. ATCase family. Heterooligomer of catalytic and regulatory chains.

The enzyme catalyses carbamoyl phosphate + L-aspartate = N-carbamoyl-L-aspartate + phosphate + H(+). It functions in the pathway pyrimidine metabolism; UMP biosynthesis via de novo pathway; (S)-dihydroorotate from bicarbonate: step 2/3. Catalyzes the condensation of carbamoyl phosphate and aspartate to form carbamoyl aspartate and inorganic phosphate, the committed step in the de novo pyrimidine nucleotide biosynthesis pathway. The protein is Aspartate carbamoyltransferase catalytic subunit of Pyrococcus abyssi (strain GE5 / Orsay).